Here is a 227-residue protein sequence, read N- to C-terminus: Orotidine 5'-phosphate decarboxylase (227 aa).

Substrate contacts are provided by residues D8, K30, 59 to 68, T118, R178, Q187, G207, and R208; that span reads DLKLYDIPNT. Catalysis depends on K61, which acts as the Proton donor.

This sequence belongs to the OMP decarboxylase family. Type 1 subfamily. As to quaternary structure, homodimer.

The catalysed reaction is orotidine 5'-phosphate + H(+) = UMP + CO2. Its pathway is pyrimidine metabolism; UMP biosynthesis via de novo pathway; UMP from orotate: step 2/2. Its function is as follows. Catalyzes the decarboxylation of orotidine 5'-monophosphate (OMP) to uridine 5'-monophosphate (UMP). The sequence is that of Orotidine 5'-phosphate decarboxylase from Sulfurimonas denitrificans (strain ATCC 33889 / DSM 1251) (Thiomicrospira denitrificans (strain ATCC 33889 / DSM 1251)).